The following is a 92-amino-acid chain: Small ribosomal subunit protein bS20 (92 aa).

Residues 1-23 (MANSPSAKKRAKQAEKRRSHNAS) are disordered. Over residues 7 to 20 (AKKRAKQAEKRRSH) the composition is skewed to basic residues.

Belongs to the bacterial ribosomal protein bS20 family.

Its function is as follows. Binds directly to 16S ribosomal RNA. The protein is Small ribosomal subunit protein bS20 of Pseudomonas fluorescens (strain ATCC BAA-477 / NRRL B-23932 / Pf-5).